A 457-amino-acid chain; its full sequence is Bifunctional protein GlmU (457 aa).

The pyrophosphorylase stretch occupies residues 1–232; the sequence is MNNLAAVILA…PAEVMGINDR (232 aa). UDP-N-acetyl-alpha-D-glucosamine is bound by residues 9–12, K23, Q75, and 80–81; these read LAAG and GT. Residue D105 coordinates Mg(2+). G142, E157, N172, and N230 together coordinate UDP-N-acetyl-alpha-D-glucosamine. Position 230 (N230) interacts with Mg(2+). Residues 233 to 253 form a linker region; the sequence is AQLAEAGQLLRGRINKALMLD. The interval 254 to 457 is N-acetyltransferase; sequence GTTLIDPQTT…NKEGWKLKKK (204 aa). The UDP-N-acetyl-alpha-D-glucosamine site is built by R336 and K354. The Proton acceptor role is filled by H366. UDP-N-acetyl-alpha-D-glucosamine contacts are provided by Y369 and N380. Acetyl-CoA contacts are provided by residues 389–390, S408, A426, and R443; that span reads NY.

It in the N-terminal section; belongs to the N-acetylglucosamine-1-phosphate uridyltransferase family. In the C-terminal section; belongs to the transferase hexapeptide repeat family. In terms of assembly, homotrimer. The cofactor is Mg(2+).

The protein localises to the cytoplasm. The enzyme catalyses alpha-D-glucosamine 1-phosphate + acetyl-CoA = N-acetyl-alpha-D-glucosamine 1-phosphate + CoA + H(+). It catalyses the reaction N-acetyl-alpha-D-glucosamine 1-phosphate + UTP + H(+) = UDP-N-acetyl-alpha-D-glucosamine + diphosphate. Its pathway is nucleotide-sugar biosynthesis; UDP-N-acetyl-alpha-D-glucosamine biosynthesis; N-acetyl-alpha-D-glucosamine 1-phosphate from alpha-D-glucosamine 6-phosphate (route II): step 2/2. It participates in nucleotide-sugar biosynthesis; UDP-N-acetyl-alpha-D-glucosamine biosynthesis; UDP-N-acetyl-alpha-D-glucosamine from N-acetyl-alpha-D-glucosamine 1-phosphate: step 1/1. It functions in the pathway bacterial outer membrane biogenesis; LPS lipid A biosynthesis. In terms of biological role, catalyzes the last two sequential reactions in the de novo biosynthetic pathway for UDP-N-acetylglucosamine (UDP-GlcNAc). The C-terminal domain catalyzes the transfer of acetyl group from acetyl coenzyme A to glucosamine-1-phosphate (GlcN-1-P) to produce N-acetylglucosamine-1-phosphate (GlcNAc-1-P), which is converted into UDP-GlcNAc by the transfer of uridine 5-monophosphate (from uridine 5-triphosphate), a reaction catalyzed by the N-terminal domain. This Geotalea uraniireducens (strain Rf4) (Geobacter uraniireducens) protein is Bifunctional protein GlmU.